Consider the following 301-residue polypeptide: Ribosomal RNA small subunit methyltransferase H (301 aa).

Residues 33–35 (GGH), Asp-52, Phe-79, Asp-100, and Gln-107 contribute to the S-adenosyl-L-methionine site.

Belongs to the methyltransferase superfamily. RsmH family.

The protein resides in the cytoplasm. It catalyses the reaction cytidine(1402) in 16S rRNA + S-adenosyl-L-methionine = N(4)-methylcytidine(1402) in 16S rRNA + S-adenosyl-L-homocysteine + H(+). In terms of biological role, specifically methylates the N4 position of cytidine in position 1402 (C1402) of 16S rRNA. The polypeptide is Ribosomal RNA small subunit methyltransferase H (Mycoplasmopsis synoviae (strain 53) (Mycoplasma synoviae)).